The sequence spans 472 residues: Riboflavin transporter RibJ (472 aa).

The Cytoplasmic segment spans residues 1 to 11 (MLPCFTRKPVD). Residues 12 to 32 (HPLGFLVALSGLLMQLMSYGI) traverse the membrane as a helical segment. Residues 33–58 (DNSYSIFSDDMHKDPSLGYPSVTTIS) are Extracellular-facing. A helical membrane pass occupies residues 59-79 (LGNSVSLGLSPAFGVLCGFLV). Over 80–85 (DRVPPR) the chain is Cytoplasmic. The chain crosses the membrane as a helical span at residues 86-106 (LMMAVSTLMLFAGLWLSSTFA). Topologically, residues 107-108 (HN) are extracellular. Residue N108 is glycosylated (N-linked (GlcNAc...) asparagine). A helical membrane pass occupies residues 109–129 (VTAVTFSYCLLASISSACMLS). The Cytoplasmic segment spans residues 130 to 144 (PGAAATSSWFNRYQG). Residues 145–165 (LAMGINFSGGGVGSAIIPSLA) traverse the membrane as a helical segment. The Extracellular segment spans residues 166-179 (GKWVVAYGWRKTFR). Residues 180 to 196 (LMSAFCAIGVVATLLSA) form a helical membrane-spanning segment. Over 197–271 (RRAPPKKEEA…TMFSRAFLGN (75 aa)) the chain is Cytoplasmic. The segment at 200 to 248 (PPKKEEAGPSEYDEGQERQEQGEEEQAHTDEENRNNNNSNGETTPARRG) is disordered. Residues 214 to 233 (GQERQEQGEEEQAHTDEENR) are compositionally biased toward basic and acidic residues. Residues 272–292 (FFCWLIFSWAFYSLIYVAVPY) traverse the membrane as a helical segment. Topologically, residues 293–315 (VSSMGKAGTVYADISPIPTDIAS) are extracellular. A helical membrane pass occupies residues 316–336 (TLFTFYGVFQIVGSILVGWLA). Over 337–341 (TGTTN) the chain is Cytoplasmic. Residues 342–362 (EFAYVLCATIGGIFCAFLGFC) traverse the membrane as a helical segment. Residues 363-365 (RSY) lie on the Extracellular side of the membrane. The chain crosses the membrane as a helical span at residues 366–386 (VAFALLLCVIGFCMAGMFAVM). The Cytoplasmic segment spans residues 387–399 (PALIAERLYGPNL). The chain crosses the membrane as a helical span at residues 400–420 (GFYMGAVFLAGVVGGFSAPPI). The Extracellular segment spans residues 421–434 (QAELQQRHYGNYTY). N-linked (GlcNAc...) asparagine glycosylation occurs at N431. The chain crosses the membrane as a helical span at residues 435 to 455 (VCVFMSACMTLAAAVCYITMW). Residues 456-472 (RDKRVRIVSAAAEAKLA) are Cytoplasmic-facing.

The protein belongs to the major facilitator superfamily. RibJ family.

It localises to the cell membrane. Transporter involved in riboflavin (vitamin B2) uptake. Also transports FMN and FAD. This Trypanosoma cruzi (strain CL Brener) protein is Riboflavin transporter RibJ.